We begin with the raw amino-acid sequence, 49 residues long: Large ribosomal subunit protein bL33 (49 aa).

Belongs to the bacterial ribosomal protein bL33 family.

This Lactiplantibacillus plantarum (strain ATCC BAA-793 / NCIMB 8826 / WCFS1) (Lactobacillus plantarum) protein is Large ribosomal subunit protein bL33.